Here is a 346-residue protein sequence, read N- to C-terminus: MSQFDSAAFIAGFPLKAHNTFGFDVRAQFACRIEREEQLMAAVRDPRAAGLPRLVLGGGSNVVLTGDFGGLVLLIALRGRRVAREDNDAWYVEAAGGEPWHEFVGWTLAQGLPGLENLALIPGTVGAAPIQNIGAYGLEMVERFASLRAVELATGDVVEMDAHACRFGYRDSFFKREGRDRFVITSVTFRLPKVWQPRAGYADLARELAAKGHADTPPTAQAIFDAVVAVRRAKLPDPLELGNAGSFFKNPVVEAAQFEALKTTEPEIVSYLQPDGRVKLAAGWLIDRCGWKGRAMGAAAVHERQALVLVNRGGASGTEVLALAKAIQRDVLERFGVELEAEPVCL.

The FAD-binding PCMH-type domain occupies 23–194 (FDVRAQFACR…TSVTFRLPKV (172 aa)). The active site involves R170. The Proton donor role is filled by S246. Residue E342 is part of the active site.

The protein belongs to the MurB family. FAD is required as a cofactor.

The protein resides in the cytoplasm. It carries out the reaction UDP-N-acetyl-alpha-D-muramate + NADP(+) = UDP-N-acetyl-3-O-(1-carboxyvinyl)-alpha-D-glucosamine + NADPH + H(+). The protein operates within cell wall biogenesis; peptidoglycan biosynthesis. Its function is as follows. Cell wall formation. This Paraburkholderia phytofirmans (strain DSM 17436 / LMG 22146 / PsJN) (Burkholderia phytofirmans) protein is UDP-N-acetylenolpyruvoylglucosamine reductase.